The following is a 199-amino-acid chain: Fe/S biogenesis protein NfuA (199 aa).

[4Fe-4S] cluster-binding residues include Cys-151 and Cys-154.

This sequence belongs to the NfuA family. In terms of assembly, homodimer. [4Fe-4S] cluster is required as a cofactor.

Its function is as follows. Involved in iron-sulfur cluster biogenesis. Binds a 4Fe-4S cluster, can transfer this cluster to apoproteins, and thereby intervenes in the maturation of Fe/S proteins. Could also act as a scaffold/chaperone for damaged Fe/S proteins. This Xylella fastidiosa (strain M23) protein is Fe/S biogenesis protein NfuA.